Reading from the N-terminus, the 387-residue chain is Exodeoxyribonuclease 7 large subunit (387 aa).

Belongs to the XseA family. In terms of assembly, heterooligomer composed of large and small subunits.

The protein localises to the cytoplasm. It carries out the reaction Exonucleolytic cleavage in either 5'- to 3'- or 3'- to 5'-direction to yield nucleoside 5'-phosphates.. Bidirectionally degrades single-stranded DNA into large acid-insoluble oligonucleotides, which are then degraded further into small acid-soluble oligonucleotides. This Parasynechococcus marenigrum (strain WH8102) protein is Exodeoxyribonuclease 7 large subunit.